The chain runs to 182 residues: MAAKNFLLTGRPGIGKTTCVVKTAELLVSRGVKVGGMVTHEVREGGSRVGFKVRDLLTGREGFLAKVGAGAGPRVGKYVVHVEELEAVGVGAILRAVSEAQVVVIDEIGPMELYSPSFLPAVLKALDSDKPVLATIHERESSSGRLRGILERGDVKLYTVTLQNRDLLPPQLAREIASLVAR.

Residues 10-17 and 102-109 each bind ATP; these read GRPGIGKT and VVVIDEIG.

The protein belongs to the THEP1 NTPase family.

It carries out the reaction a ribonucleoside 5'-triphosphate + H2O = a ribonucleoside 5'-diphosphate + phosphate + H(+). Functionally, has nucleotide phosphatase activity towards ATP, GTP, CTP, TTP and UTP. May hydrolyze nucleoside diphosphates with lower efficiency. This chain is Nucleoside-triphosphatase THEP1, found in Thermofilum pendens (strain DSM 2475 / Hrk 5).